The primary structure comprises 108 residues: Peptidyl-prolyl cis-trans isomerase Fkbp12 (108 aa).

Residues 1-21 are disordered; that stretch reads MGVQVVPIAPGDGSTYPKNGQ. The PPIase FKBP-type domain maps to 20–108; that stretch reads GQKVTVHYTG…TFDVELLKVE (89 aa).

This sequence belongs to the FKBP-type PPIase family. FKBP1 subfamily.

It is found in the cytoplasm. It carries out the reaction [protein]-peptidylproline (omega=180) = [protein]-peptidylproline (omega=0). Functionally, PPIases accelerate the folding of proteins. It catalyzes the cis-trans isomerization of proline imidic peptide bonds in oligopeptides. Binds to ligand-free TGF beta type I receptor, from which it is released upon a ligand-induced, type II receptor mediated phosphorylation of the type I receptor. Binding is inhibitory to the signaling pathways of the TGF beta family ligands. The sequence is that of Peptidyl-prolyl cis-trans isomerase Fkbp12 from Drosophila melanogaster (Fruit fly).